A 176-amino-acid chain; its full sequence is Large ribosomal subunit protein uL6 (176 aa).

Positions 151-169 (RPPEPYKGRGIKYTDEHIQ) are enriched in basic and acidic residues. The tract at residues 151–176 (RPPEPYKGRGIKYTDEHIQRKAGKTK) is disordered.

Belongs to the universal ribosomal protein uL6 family. Part of the 50S ribosomal subunit.

Functionally, this protein binds to the 23S rRNA, and is important in its secondary structure. It is located near the subunit interface in the base of the L7/L12 stalk, and near the tRNA binding site of the peptidyltransferase center. This Desulfosudis oleivorans (strain DSM 6200 / JCM 39069 / Hxd3) (Desulfococcus oleovorans) protein is Large ribosomal subunit protein uL6.